Consider the following 154-residue polypeptide: 6,7-dimethyl-8-ribityllumazine synthase (154 aa).

Residues F23, 57-59 (AYE), and 81-83 (AVI) contribute to the 5-amino-6-(D-ribitylamino)uracil site. 86–87 (GT) lines the (2S)-2-hydroxy-3-oxobutyl phosphate pocket. Residue H89 is the Proton donor of the active site. F114 provides a ligand contact to 5-amino-6-(D-ribitylamino)uracil. R128 contributes to the (2S)-2-hydroxy-3-oxobutyl phosphate binding site.

It belongs to the DMRL synthase family. In terms of assembly, forms an icosahedral capsid composed of 60 subunits, arranged as a dodecamer of pentamers.

It carries out the reaction (2S)-2-hydroxy-3-oxobutyl phosphate + 5-amino-6-(D-ribitylamino)uracil = 6,7-dimethyl-8-(1-D-ribityl)lumazine + phosphate + 2 H2O + H(+). Its pathway is cofactor biosynthesis; riboflavin biosynthesis; riboflavin from 2-hydroxy-3-oxobutyl phosphate and 5-amino-6-(D-ribitylamino)uracil: step 1/2. Functionally, catalyzes the formation of 6,7-dimethyl-8-ribityllumazine by condensation of 5-amino-6-(D-ribitylamino)uracil with 3,4-dihydroxy-2-butanone 4-phosphate. This is the penultimate step in the biosynthesis of riboflavin. The polypeptide is 6,7-dimethyl-8-ribityllumazine synthase (Acidithiobacillus ferrooxidans (strain ATCC 23270 / DSM 14882 / CIP 104768 / NCIMB 8455) (Ferrobacillus ferrooxidans (strain ATCC 23270))).